The sequence spans 479 residues: Adenosylhomocysteinase (479 aa).

Substrate-binding residues include Thr56, Asp133, and Glu199. 200–202 is a binding site for NAD(+); it reads TTT. Substrate-binding residues include Lys229 and Asp233. NAD(+) is bound by residues Asn234, 263–268, Glu286, Asn321, 342–344, and Asn390; these read GYGDVG and IGH.

It belongs to the adenosylhomocysteinase family. In terms of assembly, homotetramer. Requires NAD(+) as cofactor.

It carries out the reaction S-adenosyl-L-homocysteine + H2O = L-homocysteine + adenosine. The protein operates within amino-acid biosynthesis; L-homocysteine biosynthesis; L-homocysteine from S-adenosyl-L-homocysteine: step 1/1. Functionally, adenosylhomocysteine is a competitive inhibitor of S-adenosyl-L-methionine-dependent methyl transferase reactions; therefore adenosylhomocysteinase may play a key role in the control of methylations via regulation of the intracellular concentration of adenosylhomocysteine. The sequence is that of Adenosylhomocysteinase from Plasmodium yoelii yoelii.